The chain runs to 319 residues: Methionyl-tRNA formyltransferase (319 aa).

Residue 114–117 (SLLP) coordinates (6S)-5,6,7,8-tetrahydrofolate.

The protein belongs to the Fmt family.

The enzyme catalyses L-methionyl-tRNA(fMet) + (6R)-10-formyltetrahydrofolate = N-formyl-L-methionyl-tRNA(fMet) + (6S)-5,6,7,8-tetrahydrofolate + H(+). Functionally, attaches a formyl group to the free amino group of methionyl-tRNA(fMet). The formyl group appears to play a dual role in the initiator identity of N-formylmethionyl-tRNA by promoting its recognition by IF2 and preventing the misappropriation of this tRNA by the elongation apparatus. The polypeptide is Methionyl-tRNA formyltransferase (Acinetobacter baylyi (strain ATCC 33305 / BD413 / ADP1)).